A 264-amino-acid chain; its full sequence is uncharacterized protein (264 aa).

Residues 3–243 form the ABC transporter domain; it reads LQLDNVSLKR…QILSAFFDTP (241 aa). 35–42 contacts ATP; the sequence is GLNGAGKT.

Belongs to the ABC transporter superfamily.

This is an uncharacterized protein from Bacillus subtilis (strain 168).